A 192-amino-acid chain; its full sequence is Small ribosomal subunit protein uS4B (192 aa).

Residues serine 89 and serine 179 each carry the phosphoserine modification. Residues 107 to 181 form the S4 RNA-binding domain; that stretch reads RRLQTQVFKL…CKRKRLRSQQ (75 aa). The disordered stretch occupies residues 166–192; it reads GGRPGRCKRKRLRSQQEGGEGEEAEEE.

It belongs to the universal ribosomal protein uS4 family. In terms of assembly, component of the small ribosomal subunit (SSU). Mature yeast ribosomes consist of a small (40S) and a large (60S) subunit. The 40S small subunit contains 1 molecule of ribosomal RNA (18S rRNA) and at least 33 different proteins. The large 60S subunit contains 3 rRNA molecules (25S, 5.8S and 5S rRNA) and at least 46 different proteins. Interacts with snoRNA U3. uS11 interacts with MPP10. Component of the ribosomal small subunit (SSU) processome composed of at least 40 protein subunits and snoRNA U3.

The protein localises to the cytoplasm. Component of the ribosome, a large ribonucleoprotein complex responsible for the synthesis of proteins in the cell. The small ribosomal subunit (SSU) binds messenger RNAs (mRNAs) and translates the encoded message by selecting cognate aminoacyl-transfer RNA (tRNA) molecules. The large subunit (LSU) contains the ribosomal catalytic site termed the peptidyl transferase center (PTC), which catalyzes the formation of peptide bonds, thereby polymerizing the amino acids delivered by tRNAs into a polypeptide chain. The nascent polypeptides leave the ribosome through a tunnel in the LSU and interact with protein factors that function in enzymatic processing, targeting, and the membrane insertion of nascent chains at the exit of the ribosomal tunnel. uS4 is involved in nucleolar processing of pre-18S ribosomal RNA and ribosome assembly. The polypeptide is Small ribosomal subunit protein uS4B (rps902) (Schizosaccharomyces pombe (strain 972 / ATCC 24843) (Fission yeast)).